The chain runs to 562 residues: MATMNLPTGLHVAAKPASLDRLSSAKNVGDLFFSDSRHRKRVNTSNQIMAVQSLEHIHGVNNNVYANYVNFNVPSSGYSLGQESVYLNSPRKTKIVCTIGPSTSSREMIWKLAEAGMNVARLNMSHGDHASHQRTIDLVKEYNAQFEDKVIAIMLDTKGPEVISGDVPKPILLKEGQEFNFSIKRGVSTEDTVSVNYDDFINDVEAGDILLVDGGMMSLAVKSKTSDIVKCEVIDGGELKSRRHLNVRGKSATLPSITEKDWDDIKFGVNNQVDFYAVSFVKDAKVVHELKDYLKSCNADIHVIVKIESADSIPNLHSIISASDGAMVARGDLGAELPIEEVPLLQEDIIRRCQSMQKPVIVATNMLESMIDHPTPTRAEVSDISIAVREGADAVMLSGETAHGKYPLKAVKVMHIVALRTESSLQKSTSSPSQSAAYKSHMGEMFAFHSSSMANTLSTPIIVFTRTGSMAIILSHNRPSSTVFAFTNNERVKQRLALYHGVVPIYMEFSSDAEETFSRAIKLLLSKSLVKDGQYVTLVQSGAQPIWRRHSTHHIQVRKVQS.

Arg-121 serves as a coordination point for substrate. K(+) is bound by residues Asn-123, Ser-125, Asp-156, and Thr-157. 123-126 (NMSH) serves as a coordination point for ATP. Glu-308 contributes to the Mg(2+) binding site. Substrate-binding residues include Gly-331, Asp-332, and Thr-364. Asp-332 is a binding site for Mg(2+).

It belongs to the pyruvate kinase family. In terms of assembly, homotetramer. Requires Mg(2+) as cofactor. K(+) serves as cofactor. As to expression, highest levels in leaves. Also found in stems, roots and flowers.

It is found in the plastid. Its subcellular location is the chloroplast. It catalyses the reaction pyruvate + ATP = phosphoenolpyruvate + ADP + H(+). It functions in the pathway carbohydrate degradation; glycolysis; pyruvate from D-glyceraldehyde 3-phosphate: step 5/5. This is Pyruvate kinase isozyme G, chloroplastic from Nicotiana tabacum (Common tobacco).